A 291-amino-acid polypeptide reads, in one-letter code: uncharacterized protein (291 aa).

One can recognise an HTH lysR-type domain in the interval 1-58 (MDLKWLQTFIAAAESESFREAAEHLYLTQPAVSQHMRKLEDELDMRLFLHSGRRVVLT). The H-T-H motif DNA-binding region spans 18–37 (FREAAEHLYLTQPAVSQHMR).

Belongs to the LysR transcriptional regulatory family.

This is an uncharacterized protein from Bacillus subtilis (strain 168).